Reading from the N-terminus, the 337-residue chain is Inositol 2-dehydrogenase (337 aa).

This sequence belongs to the Gfo/Idh/MocA family. Homotetramer.

It catalyses the reaction myo-inositol + NAD(+) = scyllo-inosose + NADH + H(+). Its function is as follows. Involved in the oxidation of myo-inositol (MI) to 2-keto-myo-inositol (2KMI or 2-inosose). The polypeptide is Inositol 2-dehydrogenase (Klebsiella pneumoniae subsp. pneumoniae (strain ATCC 700721 / MGH 78578)).